The sequence spans 672 residues: Iron-phytosiderophore transporter YSL15 (672 aa).

The span at 1–11 shows a compositional bias: basic and acidic residues; it reads MEHADADRTRV. Residues 1-27 are disordered; that stretch reads MEHADADRTRVAPEIGSLHDEDAEADP. Transmembrane regions (helical) follow at residues 47–67, 70–90, 115–135, 158–178, 218–238, 279–299, 325–345, 390–410, 418–438, 450–470, 504–524, 556–576, 602–622, and 630–650; these read GVVAAALIGFVFSVIVMKIAL, GLVPTLNISAALLAFLALRGW, CAVACYTIAFGGGFGSTLLGL, GIGWMVGLLLAISFAGNLSLI, LHGFLKYFGLSLFWSFFQWFY, LVNLSTLLGAVISWGIMWPLI, FLCIALIMGDGLYHFVKVTGV, MAYSGYFLLSIIAVITIPIMF, VIIAYALGPVLGFANSYGAGL, IALFVFAAWAGKDNGVIAGLV, VGELIGTGIGCFIAPLTFMLF, ISALPKHCLSLSVGFFAFAVL, FLVGASFAIDMCVGSLVLFAW, and AAFMVPAVASGLMCGDGIWTF.

It belongs to the YSL (TC 2.A.67.2) family. Expressed in root phloem and at low levels in the shoot companion cells.

It is found in the cell membrane. In terms of biological role, involved in Fe(3+) uptake from the rhizosphere and phloem transport of iron. Plays an important role in iron homeostasis during the early stages of growth. Transports Fe(3+)-phytosiderophore, but not Fe(3+)- or Fe(2+)-nicotianamine. May not transport other chelated metals. The polypeptide is Iron-phytosiderophore transporter YSL15 (YSL15) (Oryza sativa subsp. japonica (Rice)).